A 459-amino-acid chain; its full sequence is Inositol-trisphosphate 3-kinase A (459 aa).

The segment at 1-29 is disordered; that stretch reads MTLPGRPTGMARPRGAGPCSPGLERAPRR. Omega-N-methylarginine occurs at positions 35, 55, and 62. Positions 49–164 are disordered; it reads AAAGEPRARG…TSEDVGQKSH (116 aa). Residues 116-132 are compositionally biased toward low complexity; sequence RRLSTSSLSSTGSSSLL. Phosphoserine occurs at positions 135 and 195. ATP-binding positions include Ser-195, Lys-207, 247 to 249, and Asp-260; that span reads QDL. Substrate is bound by residues Lys-262 and Arg-283. Residues 285–293 are calmodulin-binding; the sequence is DMYKKMLAV. Substrate is bound at residue 310–317; sequence KPRYMQWR. Lys-334 and Asp-414 together coordinate ATP. Residue Lys-417 participates in substrate binding.

This sequence belongs to the inositol phosphokinase (IPK) family.

It localises to the cytoplasm. Its subcellular location is the cytoskeleton. The enzyme catalyses 1D-myo-inositol 1,4,5-trisphosphate + ATP = 1D-myo-inositol 1,3,4,5-tetrakisphosphate + ADP + H(+). With respect to regulation, activated by calcium/calmodulin. Catalyzes the phosphorylation of 1D-myo-inositol 1,4,5-trisphosphate (InsP3) into 1D-myo-inositol 1,3,4,5-tetrakisphosphate and participates to the regulation of calcium homeostasis. The chain is Inositol-trisphosphate 3-kinase A from Mus musculus (Mouse).